A 271-amino-acid chain; its full sequence is Formamidopyrimidine-DNA glycosylase (271 aa).

Residue Pro2 is the Schiff-base intermediate with DNA of the active site. Glu3 acts as the Proton donor in catalysis. Catalysis depends on Lys57, which acts as the Proton donor; for beta-elimination activity. Positions 90, 109, and 150 each coordinate DNA. Residues 235–269 form an FPG-type zinc finger; that stretch reads LVYGNKDKPCPKCGGKIESLIIGQRNSFFCPKCQK. Arg259 (proton donor; for delta-elimination activity) is an active-site residue.

The protein belongs to the FPG family. Monomer. Zn(2+) is required as a cofactor.

The enzyme catalyses Hydrolysis of DNA containing ring-opened 7-methylguanine residues, releasing 2,6-diamino-4-hydroxy-5-(N-methyl)formamidopyrimidine.. It catalyses the reaction 2'-deoxyribonucleotide-(2'-deoxyribose 5'-phosphate)-2'-deoxyribonucleotide-DNA = a 3'-end 2'-deoxyribonucleotide-(2,3-dehydro-2,3-deoxyribose 5'-phosphate)-DNA + a 5'-end 5'-phospho-2'-deoxyribonucleoside-DNA + H(+). Its function is as follows. Involved in base excision repair of DNA damaged by oxidation or by mutagenic agents. Acts as a DNA glycosylase that recognizes and removes damaged bases. Has a preference for oxidized purines, such as 7,8-dihydro-8-oxoguanine (8-oxoG). Has AP (apurinic/apyrimidinic) lyase activity and introduces nicks in the DNA strand. Cleaves the DNA backbone by beta-delta elimination to generate a single-strand break at the site of the removed base with both 3'- and 5'-phosphates. This Haemophilus influenzae (strain 86-028NP) protein is Formamidopyrimidine-DNA glycosylase.